Consider the following 200-residue polypeptide: Large ribosomal subunit protein bL25 (200 aa).

It belongs to the bacterial ribosomal protein bL25 family. CTC subfamily. Part of the 50S ribosomal subunit; part of the 5S rRNA/L5/L18/L25 subcomplex. Contacts the 5S rRNA. Binds to the 5S rRNA independently of L5 and L18.

This is one of the proteins that binds to the 5S RNA in the ribosome where it forms part of the central protuberance. This chain is Large ribosomal subunit protein bL25, found in Corynebacterium glutamicum (strain ATCC 13032 / DSM 20300 / JCM 1318 / BCRC 11384 / CCUG 27702 / LMG 3730 / NBRC 12168 / NCIMB 10025 / NRRL B-2784 / 534).